A 55-amino-acid polypeptide reads, in one-letter code: Large ribosomal subunit protein bL33A (55 aa).

It belongs to the bacterial ribosomal protein bL33 family.

The sequence is that of Large ribosomal subunit protein bL33A from Mycobacterium sp. (strain KMS).